The sequence spans 491 residues: Cobyric acid synthase (491 aa).

In terms of domain architecture, GATase cobBQ-type spans 250 to 437; that stretch reads QLRVVVPVLP…VHGVFDHPQA (188 aa). Cys331 serves as the catalytic Nucleophile. His429 is a catalytic residue.

Belongs to the CobB/CobQ family. CobQ subfamily.

It participates in cofactor biosynthesis; adenosylcobalamin biosynthesis. Its function is as follows. Catalyzes amidations at positions B, D, E, and G on adenosylcobyrinic A,C-diamide. NH(2) groups are provided by glutamine, and one molecule of ATP is hydrogenolyzed for each amidation. The chain is Cobyric acid synthase from Xanthomonas axonopodis pv. citri (strain 306).